The following is a 60-amino-acid chain: Large ribosomal subunit protein uL30 (60 aa).

The protein belongs to the universal ribosomal protein uL30 family. As to quaternary structure, part of the 50S ribosomal subunit.

In Dehalococcoides mccartyi (strain ATCC BAA-2100 / JCM 16839 / KCTC 5957 / BAV1), this protein is Large ribosomal subunit protein uL30.